Reading from the N-terminus, the 205-residue chain is Holliday junction branch migration complex subunit RuvA (205 aa).

A domain I region spans residues Met1–Ile64. The tract at residues Thr65–Glu143 is domain II. A flexible linker region spans residues Arg144 to Ala156. Residues Ala157–Leu205 form a domain III region.

Belongs to the RuvA family. In terms of assembly, homotetramer. Forms an RuvA(8)-RuvB(12)-Holliday junction (HJ) complex. HJ DNA is sandwiched between 2 RuvA tetramers; dsDNA enters through RuvA and exits via RuvB. An RuvB hexamer assembles on each DNA strand where it exits the tetramer. Each RuvB hexamer is contacted by two RuvA subunits (via domain III) on 2 adjacent RuvB subunits; this complex drives branch migration. In the full resolvosome a probable DNA-RuvA(4)-RuvB(12)-RuvC(2) complex forms which resolves the HJ.

The protein localises to the cytoplasm. Its function is as follows. The RuvA-RuvB-RuvC complex processes Holliday junction (HJ) DNA during genetic recombination and DNA repair, while the RuvA-RuvB complex plays an important role in the rescue of blocked DNA replication forks via replication fork reversal (RFR). RuvA specifically binds to HJ cruciform DNA, conferring on it an open structure. The RuvB hexamer acts as an ATP-dependent pump, pulling dsDNA into and through the RuvAB complex. HJ branch migration allows RuvC to scan DNA until it finds its consensus sequence, where it cleaves and resolves the cruciform DNA. The chain is Holliday junction branch migration complex subunit RuvA from Shewanella frigidimarina (strain NCIMB 400).